A 100-amino-acid chain; its full sequence is Urease subunit gamma (100 aa).

The protein belongs to the urease gamma subunit family. As to quaternary structure, heterotrimer of UreA (gamma), UreB (beta) and UreC (alpha) subunits. Three heterotrimers associate to form the active enzyme.

The protein resides in the cytoplasm. It catalyses the reaction urea + 2 H2O + H(+) = hydrogencarbonate + 2 NH4(+). Its pathway is nitrogen metabolism; urea degradation; CO(2) and NH(3) from urea (urease route): step 1/1. This chain is Urease subunit gamma, found in Burkholderia mallei (strain NCTC 10247).